The chain runs to 298 residues: Protein transport protein SEC13-1 (298 aa).

WD repeat units lie at residues 7 to 46, 51 to 92, 97 to 138, 143 to 196, 203 to 245, and 253 to 292; these read AHND…HKLV, GHEG…WSQI, VHTA…TATP, AHAI…QSYL, GHSD…GPWV, and EFPD…KWES.

This sequence belongs to the WD repeat SEC13 family. As to quaternary structure, the COPII coat is composed of at least 5 proteins: the SEC23/24 complex, the SEC13/31 complex, and the protein SAR1. Component of the nuclear pore complex (NPC). NPC constitutes the exclusive means of nucleocytoplasmic transport. NPCs allow the passive diffusion of ions and small molecules and the active, nuclear transport receptor-mediated bidirectional transport of macromolecules such as proteins, RNAs, ribonucleoparticles (RNPs), and ribosomal subunits across the nuclear envelope. Due to its 8-fold rotational symmetry, all subunits are present with 8 copies or multiples thereof.

It is found in the cytoplasmic vesicle. The protein localises to the COPII-coated vesicle membrane. The protein resides in the endoplasmic reticulum membrane. It localises to the nucleus. Its subcellular location is the nuclear pore complex. Component of the coat protein complex II (COPII) which promotes the formation of transport vesicles from the endoplasmic reticulum (ER). The coat has two main functions, the physical deformation of the endoplasmic reticulum membrane into vesicles and the selection of cargo molecules. It also functions as a component of the nuclear pore complex (NPC). NPC components, collectively referred to as nucleoporins (NUPs), can play the role of both NPC structural components and of docking or interaction partners for transiently associated nuclear transport factors. SEC13 is required for efficient mRNA export from the nucleus to the cytoplasm and for correct nuclear pore biogenesis and distribution. The protein is Protein transport protein SEC13-1 (SEC131) of Candida glabrata (strain ATCC 2001 / BCRC 20586 / JCM 3761 / NBRC 0622 / NRRL Y-65 / CBS 138) (Yeast).